Here is a 196-residue protein sequence, read N- to C-terminus: Imidazoleglycerol-phosphate dehydratase (196 aa).

It belongs to the imidazoleglycerol-phosphate dehydratase family.

The protein resides in the cytoplasm. The catalysed reaction is D-erythro-1-(imidazol-4-yl)glycerol 3-phosphate = 3-(imidazol-4-yl)-2-oxopropyl phosphate + H2O. It functions in the pathway amino-acid biosynthesis; L-histidine biosynthesis; L-histidine from 5-phospho-alpha-D-ribose 1-diphosphate: step 6/9. In Acidiphilium cryptum (strain JF-5), this protein is Imidazoleglycerol-phosphate dehydratase.